Reading from the N-terminus, the 156-residue chain is ATP synthase subunit b (156 aa).

Residues 12–32 (VAFFIFVLFCMKYVWPPVIAA) form a helical membrane-spanning segment.

Belongs to the ATPase B chain family. As to quaternary structure, F-type ATPases have 2 components, F(1) - the catalytic core - and F(0) - the membrane proton channel. F(1) has five subunits: alpha(3), beta(3), gamma(1), delta(1), epsilon(1). F(0) has three main subunits: a(1), b(2) and c(10-14). The alpha and beta chains form an alternating ring which encloses part of the gamma chain. F(1) is attached to F(0) by a central stalk formed by the gamma and epsilon chains, while a peripheral stalk is formed by the delta and b chains.

Its subcellular location is the cell inner membrane. Its function is as follows. F(1)F(0) ATP synthase produces ATP from ADP in the presence of a proton or sodium gradient. F-type ATPases consist of two structural domains, F(1) containing the extramembraneous catalytic core and F(0) containing the membrane proton channel, linked together by a central stalk and a peripheral stalk. During catalysis, ATP synthesis in the catalytic domain of F(1) is coupled via a rotary mechanism of the central stalk subunits to proton translocation. In terms of biological role, component of the F(0) channel, it forms part of the peripheral stalk, linking F(1) to F(0). In Pseudomonas syringae pv. tomato (strain ATCC BAA-871 / DC3000), this protein is ATP synthase subunit b.